The chain runs to 1311 residues: Zinc finger protein 423 (1311 aa).

Basic residues predominate over residues 1–11; it reads MSRRKQAKPRS. Disordered regions lie at residues 1–21, 34–70, and 95–123; these read MSRRKQAKPRSVKVEEGEASD, GGLEGESECDRKSSRALEDRNSVTSQEERNEDDEDVE, and AHRCPGDGDDDPQLSWVASSPSSKDVASP. Over residues 41–54 the composition is skewed to basic and acidic residues; sequence ECDRKSSRALEDRN. Serine 55 and serine 58 each carry phosphoserine. The C2H2-type 1; degenerate zinc finger occupies 75–101; that stretch reads YTCDHCQQDFESLADLTDHRAHRCPGD. Residues 110 to 123 are compositionally biased toward polar residues; it reads WVASSPSSKDVASP. C2H2-type zinc fingers lie at residues 146-168, 174-196, 202-224, 230-252, 271-294, 303-326, and 331-353; these read YPCQFCDKSFIRLSYLKRHEQIH, FKCTFCSRLFKHKRSRDRHIKLH, YHCHECEAAFSRRDHLKIHLKTH, FKCSVCKRGFSSTSSLQSHMQAH, FMCDYCEDTFSQTEELEKHVLTLH, LQCIHCPEVFVDESTLLAHIHQAH, and HKCPMCPEQFSSVEGVYCHLDSH. A disordered region spans residues 354 to 426; it reads RQPDSSNHSV…PLRGQKKMRD (73 aa). Polar residues predominate over residues 373 to 382; that stretch reads ASMSSATPDS. Residues 390 to 404 are compositionally biased toward low complexity; it reads SVASMSSATPDSSAS. A C2H2-type 9; degenerate zinc finger spans residues 436 to 460; sequence YSCPYCSKRDFTSLAVLEIHLKTIH. C2H2-type zinc fingers lie at residues 468–491, 507–530, and 544–567; these read HTCQICLDSMPTLYNLNEHVRKLH, FHCNYCPEMFADINSLQEHIRVSH, and FFCNQCSMGFLTESSLTEHIQQAH. The C2H2-type 13; atypical zinc finger occupies 590–615; sequence YSCPYCTNSPIFGSILKLTKHIKENH. The segment at 617 to 654 is disordered; it reads NIPLAHSKKSKAEQSPVSSDVEVSSPKRQRLSGSANSI. The residue at position 631 (serine 631) is a Phosphoserine. A compositionally biased stretch (low complexity) spans 631–642; the sequence is SPVSSDVEVSSP. C2H2-type zinc fingers lie at residues 659–681, 689–711, 719–742, 747–770, 777–800, 808–830, and 834–857; these read YPCNQCDLKFSNFESFQTHLKLH, QACPQCKEDFDSQESLLQHLTVH, YVCESCDKQFSSVDDLQKHLLDMH, YHCTLCQEVFDSKVSIQVHLAVKH, YRCTACNWDFRKEADLQVHVKHSH, HKCIFCGETFSTEVELQCHITTH, and YNCRFCSKAFHAVLLLEKHLREKH. The segment at 913-935 adopts a C2H2-type 21; degenerate zinc-finger fold; sequence YGCDICGAAYTMEVLLQNHRLRD. 3 consecutive C2H2-type zinc fingers follow at residues 957–979, 986–1008, and 1047–1069; these read HKCNVCSRTFFSENGLREHLQTH, YMCPICGERFPSLLTLTEHKVTH, and FRCVVCMQTVTSTLELKIHGTFH. Serine 1081 is subject to Phosphoserine. The segment at 1091–1109 adopts a C2H2-type 25; degenerate zinc-finger fold; it reads YKCALCLKEFRSKQDLVRL. 5 C2H2-type zinc fingers span residues 1147-1170, 1195-1217, 1225-1247, 1256-1279, and 1286-1309; these read LRCPECNVKFESAEDLESHMQVDH, YQCIKCQMTFENEREIQIHVANH, HECKLCNQMFDSPAKLLCHLIEH, FKCPVCFTVFVQANKLQQHIFAVH, and YDCSQCPQKFFFQTELQNHTMSQH. Positions 1163–1174 are enriched in basic and acidic residues; it reads ESHMQVDHRDLT. The segment at 1163–1190 is disordered; the sequence is ESHMQVDHRDLTPETSGPRKGAQTSPVP.

It belongs to the krueppel C2H2-type zinc-finger protein family. As to quaternary structure, homodimer. Interacts with PARP1, SMAD1 and SMAD4. Interacts with EBF1. Interacts with CEP290. As to expression, expressed in brain, eye, olfactory epithelium, spleen and heart. Expressed in the basal layer, consisting of neural precursor cells and immature sensory neurons of the olfactory epithelium, but not in the mature receptor cells.

The protein resides in the nucleus. Transcription factor that can both act as an activator or a repressor depending on the context. Plays a central role in BMP signaling and olfactory neurogenesis. Associates with SMADs in response to BMP2 leading to activate transcription of BMP target genes. Acts as a transcriptional repressor via its interaction with EBF1, a transcription factor involved in terminal olfactory receptor neurons differentiation; this interaction preventing EBF1 to bind DNA and activate olfactory-specific genes. Involved in olfactory neurogenesis by participating in a developmental switch that regulates the transition from differentiation to maturation in olfactory receptor neurons. Controls proliferation and differentiation of neural precursors in cerebellar vermis formation. The sequence is that of Zinc finger protein 423 (Znf423) from Rattus norvegicus (Rat).